The chain runs to 168 residues: MIKSMILVALILAFASAKTCKYDSSGFQSYWRFANNSIMLQFMNTDIKNNQWTGIGFGDDKNNLVGVFFMVSNNQVTVRTGSTTEHGPPNFNQNGTNMGSSVSTQSALYFPEDETMSAVVQIPVQFQGRNLQSCQKWRWIKSGKIENGQLTRNSKSPKDKKVCPMECN.

An N-terminal signal peptide occupies residues 1-17 (MIKSMILVALILAFASA). The DOMON domain maps to 25–143 (SGFQSYWRFA…CQKWRWIKSG (119 aa)). Asparagine 35 and asparagine 94 each carry an N-linked (GlcNAc...) asparagine glycan. Residues 148 to 168 (GQLTRNSKSPKDKKVCPMECN) are disordered. Over residues 156 to 168 (SPKDKKVCPMECN) the composition is skewed to basic and acidic residues.

Its subcellular location is the secreted. The polypeptide is DOMON domain-containing protein CBG21753 (Caenorhabditis briggsae).